The following is a 203-amino-acid chain: dITP/XTP pyrophosphatase (203 aa).

A substrate-binding site is contributed by T7–K12. The active-site Proton acceptor is the D73. A Mg(2+)-binding site is contributed by D73. Substrate contacts are provided by residues S74, F155–D158, K178, and H183–R184.

This sequence belongs to the HAM1 NTPase family. As to quaternary structure, homodimer. Mg(2+) serves as cofactor.

It carries out the reaction XTP + H2O = XMP + diphosphate + H(+). The enzyme catalyses dITP + H2O = dIMP + diphosphate + H(+). The catalysed reaction is ITP + H2O = IMP + diphosphate + H(+). In terms of biological role, pyrophosphatase that catalyzes the hydrolysis of nucleoside triphosphates to their monophosphate derivatives, with a high preference for the non-canonical purine nucleotides XTP (xanthosine triphosphate), dITP (deoxyinosine triphosphate) and ITP. Seems to function as a house-cleaning enzyme that removes non-canonical purine nucleotides from the nucleotide pool, thus preventing their incorporation into DNA/RNA and avoiding chromosomal lesions. The protein is dITP/XTP pyrophosphatase of Wolinella succinogenes (strain ATCC 29543 / DSM 1740 / CCUG 13145 / JCM 31913 / LMG 7466 / NCTC 11488 / FDC 602W) (Vibrio succinogenes).